A 78-amino-acid polypeptide reads, in one-letter code: Beta sliding clamp (78 aa).

The protein belongs to the beta sliding clamp family. As to quaternary structure, forms a ring-shaped head-to-tail homodimer around DNA which binds and tethers DNA polymerases and other proteins to the DNA. The DNA replisome complex has a single clamp-loading complex (3 tau and 1 each of delta, delta', psi and chi subunits) which binds 3 Pol III cores (1 core on the leading strand and 2 on the lagging strand) each with a beta sliding clamp dimer. Additional proteins in the replisome are other copies of gamma, psi and chi, Ssb, DNA helicase and RNA primase.

It is found in the cytoplasm. Functionally, confers DNA tethering and processivity to DNA polymerases and other proteins. Acts as a clamp, forming a ring around DNA (a reaction catalyzed by the clamp-loading complex) which diffuses in an ATP-independent manner freely and bidirectionally along dsDNA. Initially characterized for its ability to contact the catalytic subunit of DNA polymerase III (Pol III), a complex, multichain enzyme responsible for most of the replicative synthesis in bacteria; Pol III exhibits 3'-5' exonuclease proofreading activity. The beta chain is required for initiation of replication as well as for processivity of DNA replication. In Serratia marcescens, this protein is Beta sliding clamp (dnaN).